Consider the following 319-residue polypeptide: Transcription factor jun-1 (319 aa).

Disordered regions lie at residues 1 to 52 (MEED…EKES) and 216 to 264 (NGVN…CRQK). The segment covering 8-19 (PPSSSTSSESPE) has biased composition (low complexity). The span at 28 to 38 (PTRRRKNSKKD) shows a compositional bias: basic residues. The basic motif stretch occupies residues 244-285 (KKKLERKRARNRQAATKCRQKKMDRIKELEEQVLHEKHRGQR). Residues 244-307 (KKKLERKRAR…EHFRRTVEHH (64 aa)) enclose the bZIP domain. A leucine-zipper region spans residues 286–293 (LDAELLEL).

This sequence belongs to the bZIP family. Jun subfamily. In terms of assembly, heterodimer; with fos-1. As to expression, isoform a, isoform b, isoform c and isoform d are expressed in the spermatheca.

It localises to the nucleus. Transcription factor that recognizes and binds to the AP-1 non-canonical enhancer heptamer motif 5'-TTAGTCA-3'. Required for ovulation. Controls plc-1 expression in the spermatheca to regulate spermathecal valve dilation. This chain is Transcription factor jun-1, found in Caenorhabditis elegans.